The sequence spans 156 residues: Small ribosomal subunit protein uS7 (156 aa).

It belongs to the universal ribosomal protein uS7 family. In terms of assembly, part of the 30S ribosomal subunit. Contacts proteins S9 and S11.

In terms of biological role, one of the primary rRNA binding proteins, it binds directly to 16S rRNA where it nucleates assembly of the head domain of the 30S subunit. Is located at the subunit interface close to the decoding center, probably blocks exit of the E-site tRNA. This chain is Small ribosomal subunit protein uS7, found in Desulfovibrio desulfuricans (strain ATCC 27774 / DSM 6949 / MB).